The chain runs to 468 residues: MESSFSFGVILAVLTILIIAVNALVVVAMLLSIYKNDGVGLCFTLNLAVADTLIGVAISGLVTDQLSSSAQHTQKTLCSLRMAFVTSSAAASVLTVMLIAFDRYLAIKQPLRYFQIMNGLVAGGCIAGLWLISYLIGFLPLGVSIFQQTTYHGPCTFFAVFHPRFVLTLSCAGFFPAVLLFVFFYCDMLKIASVHSQHIRKMEHAGAMVGACRPPRPVNDFKAVRTVSVLIGSFTLSWSPFLITSIVQVACHKCCLYQVLEKYLWLLGVGNSLLNPLIYAYWQREVRQQLCHMALGLLADGSTQPQIETLKGKEERKKVGRKTLYTCDAQTLYTCDAQTLYTCDAQTLYTCDACDTQTLYTCDAQTLYTCDAQTLYTCDAQTLYTCDAQTLYTCDAQTLYTCDTQTLYTCDAQTLYTCDAQTLYTCDAQTLYTCDAQTLYTSSLVTGQTEQTPLKRANMSDPLRTCRG.

Residues 1-6 (MESSFS) are Extracellular-facing. The helical transmembrane segment at 7-27 (FGVILAVLTILIIAVNALVVV) threads the bilayer. At 28–37 (AMLLSIYKND) the chain is on the cytoplasmic side. A helical membrane pass occupies residues 38-58 (GVGLCFTLNLAVADTLIGVAI). At 59 to 81 (SGLVTDQLSSSAQHTQKTLCSLR) the chain is on the extracellular side. The helical transmembrane segment at 82 to 102 (MAFVTSSAAASVLTVMLIAFD) threads the bilayer. Topologically, residues 103–125 (RYLAIKQPLRYFQIMNGLVAGGC) are cytoplasmic. A helical membrane pass occupies residues 126–146 (IAGLWLISYLIGFLPLGVSIF). Topologically, residues 147-164 (QQTTYHGPCTFFAVFHPR) are extracellular. Residues 165-185 (FVLTLSCAGFFPAVLLFVFFY) traverse the membrane as a helical segment. Residues 186–226 (CDMLKIASVHSQHIRKMEHAGAMVGACRPPRPVNDFKAVRT) are Cytoplasmic-facing. Residues 227–247 (VSVLIGSFTLSWSPFLITSIV) form a helical membrane-spanning segment. At 248 to 262 (QVACHKCCLYQVLEK) the chain is on the extracellular side. The chain crosses the membrane as a helical span at residues 263–283 (YLWLLGVGNSLLNPLIYAYWQ). Topologically, residues 284-468 (REVRQQLCHM…MSDPLRTCRG (185 aa)) are cytoplasmic.

This sequence belongs to the G-protein coupled receptor 1 family. Expression restricted to the beta-cells of pancreatic islets.

It is found in the cell membrane. Receptor for the endogenous fatty-acid ethanolamide oleoylethanolamide (OEA) and lysophosphatidylcholine (LPC). Functions as a glucose-dependent insulinotropic receptor. The activity of this receptor is mediated by G proteins which activate adenylate cyclase. Seems to act through a G(s) mediated pathway. This chain is Glucose-dependent insulinotropic receptor (Gpr119), found in Rattus norvegicus (Rat).